The primary structure comprises 258 residues: Snake venom serine protease 5 (258 aa).

The N-terminal stretch at 1–18 is a signal peptide; that stretch reads MVLIRVLANLLILQLSYA. Positions 19–24 are excised as a propeptide; sequence QKSSEL. Residues 25-249 enclose the Peptidase S1 domain; sequence VVGGRPCNIN…HLDWIQNIIA (225 aa). 6 disulfide bridges follow: Cys31–Cys163, Cys50–Cys66, Cys98–Cys256, Cys142–Cys210, Cys174–Cys189, and Cys200–Cys225. A glycan (N-linked (GlcNAc...) asparagine) is linked at Asn44. His65 (charge relay system) is an active-site residue. Asn103 carries N-linked (GlcNAc...) asparagine glycosylation. The active-site Charge relay system is the Asp110. N-linked (GlcNAc...) asparagine glycosylation is found at Asn121, Asn122, Asn154, and Asn170. Ser204 functions as the Charge relay system in the catalytic mechanism. Asn251 carries N-linked (GlcNAc...) asparagine glycosylation.

This sequence belongs to the peptidase S1 family. Snake venom subfamily. As to quaternary structure, monomer. In terms of tissue distribution, expressed by the venom gland.

It is found in the secreted. Functionally, snake venom serine protease that may act in the hemostasis system of the prey. This is Snake venom serine protease 5 from Trimeresurus stejnegeri (Chinese green tree viper).